The primary structure comprises 643 residues: MPSRRKSPQFGHEMGAFTSARAREVLVALGQLAAAVVVAVGVAVVSLLAIARVEWPAFPSSNQLHALTTVGQVGCLAGLVGIGWLWRHGRFRRLARLGGLVLVSAFTVVTLGMPLGATKLYLFGISVDQQFRTEYLTRLTDTAALRDMTYIGLPPFYPPGWFWIGGRAAALTGTPAWEMFKPWAITSMAIAVAVALVLWWRMIRFEYALLVTVATAAVMLAYSSPEPYAAMITVLLPPMLVLTWSGLGARDRQGWAAVVGAGVFLGFAATWYTLLVAYGAFTVVLMALLLAGSRLQSGIKAAVDPLCRLAVVGAIAAAIGSTTWLPYLLRAARDPVSDTGSAQHYLPADGAALTFPMLQFSLLGAICLLGTLWLVMRARSSAPAGALAIGVLAVYLWSLLSMLATLARTTLLSFRLQPTLSVLLVAAGAFGFVEAVQALGKRGRGVIPMAAAIGLAGAIAFSQDIPDVLRPDLTIAYTDTDGYGQRGDRRPPGSEKYYPAIDAAIRRVTGKRRDRTVVLTADYSFLSYYPYWGFQGLTPHYANPLAQFDKRATQIDSWSGLSTADEFIAALDKLPWQPPTVFLMRHGAHNSYTLRLAQDVYPNQPNVRRYTVDLRTALFADPRFVVEDIGPFVLAIRKPQESA.

Transmembrane regions (helical) follow at residues 25–45 (VLVA…VAVV), 66–86 (ALTT…GWLW), 97–117 (LGGL…PLGA), 180–200 (FKPW…VLWW), 205–225 (FEYA…YSSP), 229–249 (AAMI…GLGA), 255–272 (WAAV…ATWY), 276–293 (VAYG…LAGS), 309–329 (LAVV…PYLL), 355–375 (FPML…LWLV), 384–404 (AGAL…SMLA), 420–440 (LSVL…QALG), and 445–465 (GVIP…SQDI). At 466–643 (PDVLRPDLTI…LAIRKPQESA (178 aa)) the chain is on the extracellular side.

It belongs to the glycosyltransferase 85 family.

The protein resides in the cell membrane. The catalysed reaction is Adds an alpha-D-arabinofuranosyl group from trans,octacis-decaprenylphospho-beta-D-arabinofuranose at the 5-O-position of the eighth, tenth and twelfth galactofuranose unit of the galactofuranan chain of [beta-D-galactofuranosyl-(1-&gt;5)-beta-D-galactofuranosyl-(1-&gt;6)]14-beta-D-galactofuranosyl-(1-&gt;5)-beta-D-galactofuranosyl-(1-&gt;4)-alpha-L-rhamnopyranosyl-(1-&gt;3)-N-acetyl-alpha-D-glucosaminyl-diphospho-trans,octacis-decaprenol.. It participates in cell wall biogenesis; cell wall polysaccharide biosynthesis. Its function is as follows. Involved in the biosynthesis of the arabinogalactan (AG) region of the mycolylarabinogalactan-peptidoglycan (mAGP) complex, an essential component of the mycobacterial cell wall. Catalyzes the addition of the first key arabinofuranosyl (Araf) residue from the sugar donor decaprenyl-phospho-arabinose (DPA) on the C-5 of a 6-linked galactofuranosyl (Galf) of the galactan domain, thus 'priming' the galactan for further elaboration by other arabinofuranosyltransferases. It is not able to add an Araf residue to a terminal Galf. The polypeptide is Galactan 5-O-arabinofuranosyltransferase (Mycobacterium tuberculosis (strain CDC 1551 / Oshkosh)).